A 178-amino-acid polypeptide reads, in one-letter code: Large ribosomal subunit protein uL6 (178 aa).

It belongs to the universal ribosomal protein uL6 family. Part of the 50S ribosomal subunit.

This protein binds to the 23S rRNA, and is important in its secondary structure. It is located near the subunit interface in the base of the L7/L12 stalk, and near the tRNA binding site of the peptidyltransferase center. In Wolinella succinogenes (strain ATCC 29543 / DSM 1740 / CCUG 13145 / JCM 31913 / LMG 7466 / NCTC 11488 / FDC 602W) (Vibrio succinogenes), this protein is Large ribosomal subunit protein uL6.